The chain runs to 613 residues: Phostensin (613 aa).

The span at 15 to 33 shows a compositional bias: basic and acidic residues; sequence RRQEEASVRGREKAERERL. 2 disordered regions span residues 15–231 and 266–505; these read RRQE…SAYQ and GEER…GKKR. 5 positions are modified to phosphoserine: Ser54, Ser125, Ser133, Ser175, and Ser195. Composition is skewed to basic and acidic residues over residues 104–154 and 167–191; these read RSEE…ERRL and LEAR…EPWK. A Phosphothreonine modification is found at Thr199. The span at 199–221 shows a compositional bias: basic and acidic residues; it reads TPERSLRLAESREQSPRRKEVES. Position 224 is a phosphoserine (Ser224). Over residues 266–282 the composition is skewed to basic and acidic residues; it reads GEERQGYSEKCGRKEEW. Residues 301–310 show a composition bias toward polar residues; the sequence is REAQGSSSTG. Composition is skewed to basic and acidic residues over residues 314–327, 340–350, and 357–367; these read AEQR…RGMK, KAREWTPRDIE, and EPSESAEKRLE. A phosphoserine mark is found at Ser368 and Ser432. Over residues 424–446 the composition is skewed to pro residues; sequence QPPPPAPLSPPPPAPTAPQPPGD. Lys457 carries the N6-acetyllysine modification. The segment covering 476 to 499 has biased composition (low complexity); it reads PRRSVPPTTPATPTSPATADAAVP. Residues Ser490 and Ser530 each carry the phosphoserine modification. The interval 552-594 is disordered; it reads QYPSESSVLEELGPEPEVPSAPNPPAAQPDDEEDEEELLLLQP. Over residues 567–578 the composition is skewed to pro residues; sequence PEVPSAPNPPAA. Acidic residues predominate over residues 580–589; it reads PDDEEDEEEL.

Interacts with Protein phosphatase 1 (PP1).

The protein localises to the cytoplasm. Its subcellular location is the cytoskeleton. Its function is as follows. May target protein phosphatase 1 to F-actin cytoskeleton. The sequence is that of Phostensin (PPP1R18) from Macaca mulatta (Rhesus macaque).